The sequence spans 222 residues: Interleukin-12 subunit alpha (222 aa).

The signal sequence occupies residues 1 to 25 (MCPLRSLFLMATLVFLNHLDHLSLA). 3 disulfides stabilise this stretch: Cys40/Cys113, Cys67/Cys199, and Cys88/Cys126. Residues Asn96 and Asn174 are each glycosylated (N-linked (GlcNAc...) asparagine).

Belongs to the IL-6 superfamily. Heterodimer with IL12B; disulfide-linked. This heterodimer is known as interleukin IL-12. Heterodimer with EBI3/IL27B; not disulfide-linked. This heterodimer is known as interleukin IL-35. Interacts with NBR1; this interaction promotes IL-12 secretion.

The protein localises to the secreted. Functionally, heterodimerizes with IL12B to form the IL-12 cytokine or with EBI3/IL27B to form the IL-35 cytokine. IL-12 is primarily produced by professional antigen-presenting cells (APCs) such as B-cells and dendritic cells (DCs) as well as macrophages and granulocytes and regulates T-cell and natural killer-cell responses, induces the production of interferon-gamma (IFN-gamma), favors the differentiation of T-helper 1 (Th1) cells and is an important link between innate resistance and adaptive immunity. Mechanistically, exerts its biological effects through a receptor composed of IL12R1 and IL12R2 subunits. Binding to the receptor results in the rapid tyrosine phosphorylation of a number of cellular substrates including the JAK family kinases TYK2 and JAK2. In turn, recruited STAT4 gets phosphorylated and translocates to the nucleus where it regulates cytokine/growth factor responsive genes. As part of IL-35, plays essential roles in maintaining the immune homeostasis of the liver microenvironment and also functions as an immune-suppressive cytokine. Mediates biological events through unconventional receptors composed of IL12RB2 and gp130/IL6ST heterodimers or homodimers. Signaling requires the transcription factors STAT1 and STAT4, which form a unique heterodimer that binds to distinct DNA sites. The polypeptide is Interleukin-12 subunit alpha (IL12A) (Lama glama (Llama)).